Consider the following 549-residue polypeptide: Oxygen-dependent choline dehydrogenase (549 aa).

4–33 (DFVIIGSGSAGSALAYRLSEDGKNSVLVIE) provides a ligand contact to FAD. The active-site Proton acceptor is His-465.

The protein belongs to the GMC oxidoreductase family. Requires FAD as cofactor.

It catalyses the reaction choline + A = betaine aldehyde + AH2. The catalysed reaction is betaine aldehyde + NAD(+) + H2O = glycine betaine + NADH + 2 H(+). It functions in the pathway amine and polyamine biosynthesis; betaine biosynthesis via choline pathway; betaine aldehyde from choline (cytochrome c reductase route): step 1/1. Involved in the biosynthesis of the osmoprotectant glycine betaine. Catalyzes the oxidation of choline to betaine aldehyde and betaine aldehyde to glycine betaine at the same rate. The chain is Oxygen-dependent choline dehydrogenase from Rhizobium etli (strain CIAT 652).